Reading from the N-terminus, the 438-residue chain is Xaa-Pro dipeptidase 2 (438 aa).

Mn(2+)-binding residues include D242, D253, H333, E378, and E414.

The protein belongs to the peptidase M24B family. Bacterial-type prolidase subfamily. Mn(2+) is required as a cofactor.

The catalysed reaction is Xaa-L-Pro dipeptide + H2O = an L-alpha-amino acid + L-proline. Splits dipeptides with a prolyl residue in the C-terminal position. This chain is Xaa-Pro dipeptidase 2, found in Idiomarina loihiensis (strain ATCC BAA-735 / DSM 15497 / L2-TR).